The sequence spans 417 residues: Putative competence-damage inducible protein (417 aa).

Belongs to the CinA family.

This Oceanobacillus iheyensis (strain DSM 14371 / CIP 107618 / JCM 11309 / KCTC 3954 / HTE831) protein is Putative competence-damage inducible protein.